The primary structure comprises 210 residues: Glutathione S-transferase-like protein FUS3 (210 aa).

The GST N-terminal domain maps to 1–74; it reads MPNARVFKIL…YVAQSGPQAS (74 aa). One can recognise a GST C-terminal domain in the interval 80–206; that stretch reads DAMSSAKIRQ…GKPNFIEKRR (127 aa).

Belongs to the GST superfamily.

In terms of biological role, glutathione S-transferase-like protein; part of the gene cluster that mediates the biosynthesis of the mycotoxin fusarin C. Within the cluster, FUS1, FUS2, FUS8 and FUS9 are sufficient for fusarin production. The other FUS cluster members are not essential for fusarin C biosynthesis. This Gibberella fujikuroi (strain CBS 195.34 / IMI 58289 / NRRL A-6831) (Bakanae and foot rot disease fungus) protein is Glutathione S-transferase-like protein FUS3.